A 201-amino-acid chain; its full sequence is Recombination protein RecR (201 aa).

The C4-type zinc-finger motif lies at 57 to 72 (CTHCRTFTEEESCAIC). The 96-residue stretch at 81–176 (GFLCVVEQPS…KVSRIAHGIP (96 aa)) folds into the Toprim domain.

Belongs to the RecR family.

In terms of biological role, may play a role in DNA repair. It seems to be involved in an RecBC-independent recombinational process of DNA repair. It may act with RecF and RecO. The protein is Recombination protein RecR of Histophilus somni (strain 2336) (Haemophilus somnus).